The following is a 513-amino-acid chain: ATP synthase subunit alpha (513 aa).

Residue 169–176 (GDRQIGKT) participates in ATP binding.

It belongs to the ATPase alpha/beta chains family. As to quaternary structure, F-type ATPases have 2 components, CF(1) - the catalytic core - and CF(0) - the membrane proton channel. CF(1) has five subunits: alpha(3), beta(3), gamma(1), delta(1), epsilon(1). CF(0) has three main subunits: a(1), b(2) and c(9-12). The alpha and beta chains form an alternating ring which encloses part of the gamma chain. CF(1) is attached to CF(0) by a central stalk formed by the gamma and epsilon chains, while a peripheral stalk is formed by the delta and b chains.

The protein localises to the cell inner membrane. The catalysed reaction is ATP + H2O + 4 H(+)(in) = ADP + phosphate + 5 H(+)(out). Produces ATP from ADP in the presence of a proton gradient across the membrane. The alpha chain is a regulatory subunit. The sequence is that of ATP synthase subunit alpha from Francisella tularensis subsp. mediasiatica (strain FSC147).